A 518-amino-acid polypeptide reads, in one-letter code: Sodium-dependent glucose transporter 1 (518 aa).

The next 12 helical transmembrane spans lie at Thr19–Val39, Gly53–Thr73, Cys82–Leu102, Asn107–Phe127, Leu139–His159, Phe221–Tyr241, Thr307–Ser327, Tyr347–Met367, Leu376–Ala396, Leu400–Arg420, Glu438–Glu458, and Ser466–Tyr486. The span at Arg414–Lys426 shows a compositional bias: basic and acidic residues. The interval Arg414–Lys448 is disordered. Residues Glu436–Lys448 show a composition bias toward acidic residues.

Belongs to the major facilitator superfamily.

The protein resides in the apical cell membrane. Functionally, may function as a sodium-dependent glucose transporter. Potential channels for urea in the inner medulla of kidney. This Homo sapiens (Human) protein is Sodium-dependent glucose transporter 1.